An 89-amino-acid polypeptide reads, in one-letter code: Small ribosomal subunit protein uS15 (89 aa).

It belongs to the universal ribosomal protein uS15 family. In terms of assembly, part of the 30S ribosomal subunit. Forms a bridge to the 50S subunit in the 70S ribosome, contacting the 23S rRNA.

Its function is as follows. One of the primary rRNA binding proteins, it binds directly to 16S rRNA where it helps nucleate assembly of the platform of the 30S subunit by binding and bridging several RNA helices of the 16S rRNA. Functionally, forms an intersubunit bridge (bridge B4) with the 23S rRNA of the 50S subunit in the ribosome. The sequence is that of Small ribosomal subunit protein uS15 from Bifidobacterium longum (strain DJO10A).